The following is a 391-amino-acid chain: NADH-quinone oxidoreductase subunit D (391 aa).

This sequence belongs to the complex I 49 kDa subunit family. As to quaternary structure, NDH-1 is composed of 14 different subunits. Subunits NuoB, C, D, E, F, and G constitute the peripheral sector of the complex.

It is found in the cell inner membrane. The catalysed reaction is a quinone + NADH + 5 H(+)(in) = a quinol + NAD(+) + 4 H(+)(out). In terms of biological role, NDH-1 shuttles electrons from NADH, via FMN and iron-sulfur (Fe-S) centers, to quinones in the respiratory chain. The immediate electron acceptor for the enzyme in this species is believed to be ubiquinone. Couples the redox reaction to proton translocation (for every two electrons transferred, four hydrogen ions are translocated across the cytoplasmic membrane), and thus conserves the redox energy in a proton gradient. The chain is NADH-quinone oxidoreductase subunit D from Pelagibacter ubique (strain HTCC1062).